A 252-amino-acid chain; its full sequence is Uracil-DNA glycosylase (252 aa).

The active-site Proton acceptor is the Asp-78.

It belongs to the uracil-DNA glycosylase (UDG) superfamily. UNG family.

It localises to the cytoplasm. It carries out the reaction Hydrolyzes single-stranded DNA or mismatched double-stranded DNA and polynucleotides, releasing free uracil.. Functionally, excises uracil residues from the DNA which can arise as a result of misincorporation of dUMP residues by DNA polymerase or due to deamination of cytosine. This is Uracil-DNA glycosylase from Bordetella avium (strain 197N).